The chain runs to 734 residues: MKGATLVALAATIGNFLQGWDNATIAGAMVYINKDLNLPTSVQGLVVAMSLIGATVITTCSGPISDWLGRRPMLILSSVMYFVCGLIMLWSPNVYVLCFARLLNGFGAGLAVTLVPVYISETAPPEIRGQLNTLPQFLGSGGMFLSYCMVFTMSLSDSPSWRAMLGVLSIPSLLYLFLTVFYLPESPRWLVSKGRMDEAKRVLQQLCGREDVTDEMALLVEGLDIGGEKTMEDLLVTLEDHEGDDTLETVDEDGQMRLYGTHENQSYLARPVPEQNSSLGLRSRHGSLANQSMILKDPLVNLFGSLHEKMPEAGGNTRSGIFPHFGSMFSTTADAPHGKPAHWEKDIESHYNKDNDDYATDDGAGDDDDSDNDLRSPLMSRQTTSMDKDMIPHPTSGSTLSMRRHSTLMQGNGESSMGIGGGWHMGYRYENDEYKRYYLKEDGAESRRGSIISIPGGPDGGGSYIHASALVSRSVLGPKSVHGSAMVPPEKIAASGPLWSALLEPGVKRALVVGVGIQILQQFSGINGVLYYTPQILERAGVDILLSSLGLSSISASFLISGLTTLLMLPAIVVAMRLMDVSGRRSLLLWTIPVLIVSLVVLVISELIHISKVVNAALSTGCVVLYFCFFVMGYGPIPNILCSEIFPTRVRGLCIAICAMVFWIGDIIVTYSLPVLLSSIGLVGVFSIYAAVCVISWIFVYMKVPETKGMPLEVITDYFAFGAQAQASAPSKDI.

Helical transmembrane passes span 6–26, 44–64, 79–99, 102–122, 133–153, and 163–183; these read LVAL…ATIA, GLVV…SGPI, VMYF…VLCF, LLNG…ISET, TLPQ…VFTM, and AMLG…VFYL. Residues 351 to 403 are disordered; the sequence is YNKDNDDYATDDGAGDDDDSDNDLRSPLMSRQTTSMDKDMIPHPTSGSTLSMR. A compositionally biased stretch (acidic residues) spans 357-371; sequence DYATDDGAGDDDDSD. Residues Ser-446 and Ser-480 each carry the phosphoserine modification. Transmembrane regions (helical) follow at residues 510-530, 556-576, 588-608, 621-641, 653-673, and 680-700; these read ALVV…NGVL, ASFL…VVAM, LLWT…SELI, GCVV…PNIL, LCIA…TYSL, and IGLV…WIFV.

It belongs to the major facilitator superfamily. Sugar transporter (TC 2.A.1.1) family. As to quaternary structure, binds to VIK at the tonoplast. In terms of processing, phosphorylated by VIK; this activation promotes carrier activity. As to expression, mostly expressed in juvenile and adult leaves, to a lower extent, in flower tissues, and, at low levels, in roots and stems.

It localises to the vacuole membrane. It catalyses the reaction D-glucose(out) + H(+)(in) = D-glucose(in) + H(+)(out). The enzyme catalyses sucrose(out) + H(+)(in) = sucrose(in) + H(+)(out). With respect to regulation, enhanced activation by VIK-mediated phosphorylation promoting carrier activity and consequently vacuolar sugar accumulation. Functionally, sugar proton-coupled antiporter which contributes to vacuolar sugar import (e.g. monosaccharides including glucose, sucrose and fructose), particularly during stress responses (e.g. in response to cold). Required for cytosolic glucose homeostasis. The sequence is that of Monosaccharide-sensing protein 1 from Arabidopsis thaliana (Mouse-ear cress).